The chain runs to 336 residues: COP9 signalosome complex subunit 5 (336 aa).

One can recognise an MPN domain in the interval 44–181; the sequence is VRISSVAMIK…IGAFRTIPEG (138 aa). Zn(2+) contacts are provided by His127, His129, and Asp140. A JAMM motif motif is present at residues 127–140; sequence HSHPGYGCWLSGID.

The protein belongs to the peptidase M67A family. CSN5 subfamily. Component of the COP9 signalosome (CSN) complex.

The protein resides in the cytoplasm. It localises to the nucleus. Catalytic component of the COP9 signalosome (CSN) complex that acts as an regulator of the ubiquitin (Ubl) conjugation pathway by mediating the deneddylation of the cullin subunit of SCF-type E3 ubiquitin-protein ligase complexes. The CSN complex is involved in the regulation of the circadian clock through its control of the stability of the SCF(FWD-1) complex. This Neurospora crassa (strain ATCC 24698 / 74-OR23-1A / CBS 708.71 / DSM 1257 / FGSC 987) protein is COP9 signalosome complex subunit 5 (csn-5).